We begin with the raw amino-acid sequence, 295 residues long: Glycine N-acyltransferase (295 aa).

K15, K126, and K140 each carry N6-acetyllysine; alternate. An N6-succinyllysine; alternate mark is found at K15, K126, and K140. N6-acetyllysine is present on K158. Position 168 is an N6-succinyllysine (K168). K255 is modified (N6-acetyllysine; alternate). K255 carries the N6-succinyllysine; alternate modification.

Belongs to the glycine N-acyltransferase family. In terms of tissue distribution, detected in liver (at protein level).

The protein localises to the mitochondrion. The enzyme catalyses an acyl-CoA + glycine = an N-acylglycine + CoA + H(+). It catalyses the reaction benzoyl-CoA + glycine = N-benzoylglycine + CoA + H(+). Functionally, mitochondrial acyltransferase which transfers an acyl group to the N-terminus of glycine and glutamine, although much less efficiently. Can conjugate a multitude of substrates to form a variety of N-acylglycines, thereby detoxify xenobiotics, such as benzoic acid or salicylic acid, and endogenous organic acids, such as isovaleric acid. The chain is Glycine N-acyltransferase (GLYAT) from Bos taurus (Bovine).